The sequence spans 421 residues: Putative B3 domain-containing protein Os08g0333500 (421 aa).

The TF-B3 DNA-binding region spans 1–51 (MTVELEKIAGSFFISKGWKTFVHRTGLLSGQYIRFQVLTPSKINVLLFDKK). A disordered region spans residues 92 to 121 (SHTSNKETSSDSRTESMTDIPSSSDNSGET). The span at 95–107 (SNKETSSDSRTES) shows a compositional bias: basic and acidic residues. Polar residues predominate over residues 108–121 (MTDIPSSSDNSGET).

It is found in the nucleus. This Oryza sativa subsp. japonica (Rice) protein is Putative B3 domain-containing protein Os08g0333500.